A 452-amino-acid chain; its full sequence is Cysteine--tRNA ligase (452 aa).

Position 27 (Cys-27) interacts with Zn(2+). A 'HIGH' region motif is present at residues 29–39; the sequence is PTVQDHFHIGH. The Zn(2+) site is built by Asp-207, His-232, and Glu-236. A 'KMSKS' region motif is present at residues 265 to 269; sequence KMSKS. ATP is bound at residue Lys-268.

Belongs to the class-I aminoacyl-tRNA synthetase family. The cofactor is Zn(2+).

It is found in the cytoplasm. It carries out the reaction tRNA(Cys) + L-cysteine + ATP = L-cysteinyl-tRNA(Cys) + AMP + diphosphate. The polypeptide is Cysteine--tRNA ligase (Thermoplasma acidophilum (strain ATCC 25905 / DSM 1728 / JCM 9062 / NBRC 15155 / AMRC-C165)).